Reading from the N-terminus, the 549-residue chain is Dihydroxy-acid dehydratase (549 aa).

Asp78 contacts Mg(2+). Cys119 contacts [2Fe-2S] cluster. Residues Asp120 and Lys121 each coordinate Mg(2+). Position 121 is an N6-carboxylysine (Lys121). Cys192 contacts [2Fe-2S] cluster. Glu439 is a binding site for Mg(2+). Ser465 acts as the Proton acceptor in catalysis.

Belongs to the IlvD/Edd family. As to quaternary structure, homodimer. [2Fe-2S] cluster serves as cofactor. It depends on Mg(2+) as a cofactor.

It carries out the reaction (2R)-2,3-dihydroxy-3-methylbutanoate = 3-methyl-2-oxobutanoate + H2O. The enzyme catalyses (2R,3R)-2,3-dihydroxy-3-methylpentanoate = (S)-3-methyl-2-oxopentanoate + H2O. The protein operates within amino-acid biosynthesis; L-isoleucine biosynthesis; L-isoleucine from 2-oxobutanoate: step 3/4. Its pathway is amino-acid biosynthesis; L-valine biosynthesis; L-valine from pyruvate: step 3/4. Its function is as follows. Functions in the biosynthesis of branched-chain amino acids. Catalyzes the dehydration of (2R,3R)-2,3-dihydroxy-3-methylpentanoate (2,3-dihydroxy-3-methylvalerate) into 2-oxo-3-methylpentanoate (2-oxo-3-methylvalerate) and of (2R)-2,3-dihydroxy-3-methylbutanoate (2,3-dihydroxyisovalerate) into 2-oxo-3-methylbutanoate (2-oxoisovalerate), the penultimate precursor to L-isoleucine and L-valine, respectively. The polypeptide is Dihydroxy-acid dehydratase (Endomicrobium trichonymphae).